Here is a 160-residue protein sequence, read N- to C-terminus: SsrA-binding protein (160 aa).

The segment at 130–160 (LAKGKKKHDKRADQKEQDWQRQKQRLMKHKV) is disordered. Residues 139 to 150 (KRADQKEQDWQR) show a composition bias toward basic and acidic residues. Residues 151-160 (QKQRLMKHKV) show a composition bias toward basic residues.

This sequence belongs to the SmpB family.

It is found in the cytoplasm. Required for rescue of stalled ribosomes mediated by trans-translation. Binds to transfer-messenger RNA (tmRNA), required for stable association of tmRNA with ribosomes. tmRNA and SmpB together mimic tRNA shape, replacing the anticodon stem-loop with SmpB. tmRNA is encoded by the ssrA gene; the 2 termini fold to resemble tRNA(Ala) and it encodes a 'tag peptide', a short internal open reading frame. During trans-translation Ala-aminoacylated tmRNA acts like a tRNA, entering the A-site of stalled ribosomes, displacing the stalled mRNA. The ribosome then switches to translate the ORF on the tmRNA; the nascent peptide is terminated with the 'tag peptide' encoded by the tmRNA and targeted for degradation. The ribosome is freed to recommence translation, which seems to be the essential function of trans-translation. The polypeptide is SsrA-binding protein (Alkalilimnicola ehrlichii (strain ATCC BAA-1101 / DSM 17681 / MLHE-1)).